The following is a 130-amino-acid chain: Large ribosomal subunit protein bL19 (130 aa).

Belongs to the bacterial ribosomal protein bL19 family.

Its function is as follows. This protein is located at the 30S-50S ribosomal subunit interface and may play a role in the structure and function of the aminoacyl-tRNA binding site. The polypeptide is Large ribosomal subunit protein bL19 (Cupriavidus metallidurans (strain ATCC 43123 / DSM 2839 / NBRC 102507 / CH34) (Ralstonia metallidurans)).